Consider the following 225-residue polypeptide: Uracil-DNA glycosylase (225 aa).

Catalysis depends on D65, which acts as the Proton acceptor.

It belongs to the uracil-DNA glycosylase (UDG) superfamily. UNG family.

It is found in the cytoplasm. It carries out the reaction Hydrolyzes single-stranded DNA or mismatched double-stranded DNA and polynucleotides, releasing free uracil.. Its function is as follows. Excises uracil residues from the DNA which can arise as a result of misincorporation of dUMP residues by DNA polymerase or due to deamination of cytosine. This is Uracil-DNA glycosylase from Lysinibacillus sphaericus (strain C3-41).